A 468-amino-acid polypeptide reads, in one-letter code: Bifunctional protein HldE (468 aa).

Residues 1 to 315 (MAKKVEILVV…ELLRSRANAE (315 aa)) are ribokinase. 192 to 195 (NRKE) provides a ligand contact to ATP. Residue aspartate 260 is part of the active site. Residues 340–468 (FTNGCFDILH…IVKRIKDADK (129 aa)) are cytidylyltransferase.

The protein in the N-terminal section; belongs to the carbohydrate kinase PfkB family. It in the C-terminal section; belongs to the cytidylyltransferase family. As to quaternary structure, homodimer.

The catalysed reaction is D-glycero-beta-D-manno-heptose 7-phosphate + ATP = D-glycero-beta-D-manno-heptose 1,7-bisphosphate + ADP + H(+). It catalyses the reaction D-glycero-beta-D-manno-heptose 1-phosphate + ATP + H(+) = ADP-D-glycero-beta-D-manno-heptose + diphosphate. Its pathway is nucleotide-sugar biosynthesis; ADP-L-glycero-beta-D-manno-heptose biosynthesis; ADP-L-glycero-beta-D-manno-heptose from D-glycero-beta-D-manno-heptose 7-phosphate: step 1/4. It functions in the pathway nucleotide-sugar biosynthesis; ADP-L-glycero-beta-D-manno-heptose biosynthesis; ADP-L-glycero-beta-D-manno-heptose from D-glycero-beta-D-manno-heptose 7-phosphate: step 3/4. Functionally, catalyzes the phosphorylation of D-glycero-D-manno-heptose 7-phosphate at the C-1 position to selectively form D-glycero-beta-D-manno-heptose-1,7-bisphosphate. Catalyzes the ADP transfer from ATP to D-glycero-beta-D-manno-heptose 1-phosphate, yielding ADP-D-glycero-beta-D-manno-heptose. The protein is Bifunctional protein HldE of Campylobacter curvus (strain 525.92).